Reading from the N-terminus, the 119-residue chain is MSKIKTLRLEATIHKLLSQAISTEINNSLIKTSVITAIKLSDDKSVAKIYIDCLIPNNIAKTLQAYKDATGVFRHVLSKHLTIRRIPQLVFYYDDSISKGAKIDQILAEIKQEKKENHE.

The protein belongs to the RbfA family. As to quaternary structure, monomer. Binds 30S ribosomal subunits, but not 50S ribosomal subunits or 70S ribosomes.

It localises to the cytoplasm. Its function is as follows. One of several proteins that assist in the late maturation steps of the functional core of the 30S ribosomal subunit. Associates with free 30S ribosomal subunits (but not with 30S subunits that are part of 70S ribosomes or polysomes). Required for efficient processing of 16S rRNA. May interact with the 5'-terminal helix region of 16S rRNA. The sequence is that of Ribosome-binding factor A from Mycoplasmoides gallisepticum (strain R(low / passage 15 / clone 2)) (Mycoplasma gallisepticum).